A 67-amino-acid polypeptide reads, in one-letter code: Small ribosomal subunit protein eS17 (67 aa).

Belongs to the eukaryotic ribosomal protein eS17 family.

This Pyrococcus horikoshii (strain ATCC 700860 / DSM 12428 / JCM 9974 / NBRC 100139 / OT-3) protein is Small ribosomal subunit protein eS17.